Here is a 261-residue protein sequence, read N- to C-terminus: MRIALGIEYDGAAYYGWQRQKEVISVQQELEQSLSKIANHTVRVHCAGRTDSGVHSTGQVVHFETEAIRKDVAWTLGVNANLPKDIAVRWVKQVDSSFHARFSATARHYRYIIYNGAFRPGILGTGLSHYHMDLDVQKMHLAGQMLLGEQDFTSFRALHCQASSPVKCIEYLNISQRSQFIIIDIKANAFLHHMVRNIAGSLIEIGCGKQPVDWLKTLLAYKDRSKAAATAKPGGLYLVEVDYPSQYDLPRPPCGPLFLEL.

The Nucleophile role is filled by D51. Y109 provides a ligand contact to substrate.

It belongs to the tRNA pseudouridine synthase TruA family. In terms of assembly, homodimer.

It carries out the reaction uridine(38/39/40) in tRNA = pseudouridine(38/39/40) in tRNA. Functionally, formation of pseudouridine at positions 38, 39 and 40 in the anticodon stem and loop of transfer RNAs. The polypeptide is tRNA pseudouridine synthase A (Psychromonas ingrahamii (strain DSM 17664 / CCUG 51855 / 37)).